A 130-amino-acid chain; its full sequence is Large ribosomal subunit protein bL21 (130 aa).

The protein belongs to the bacterial ribosomal protein bL21 family. As to quaternary structure, part of the 50S ribosomal subunit. Contacts protein L20.

This protein binds to 23S rRNA in the presence of protein L20. This Trichormus variabilis (strain ATCC 29413 / PCC 7937) (Anabaena variabilis) protein is Large ribosomal subunit protein bL21.